The primary structure comprises 185 residues: Ribosome-recycling factor (185 aa).

Belongs to the RRF family.

Its subcellular location is the cytoplasm. Its function is as follows. Responsible for the release of ribosomes from messenger RNA at the termination of protein biosynthesis. May increase the efficiency of translation by recycling ribosomes from one round of translation to another. In Zymomonas mobilis subsp. mobilis (strain ATCC 31821 / ZM4 / CP4), this protein is Ribosome-recycling factor.